Consider the following 916-residue polypeptide: Phosphoenolpyruvate carboxylase (916 aa).

Catalysis depends on residues His-144 and Lys-578.

Belongs to the PEPCase type 1 family. Requires Mg(2+) as cofactor.

It carries out the reaction oxaloacetate + phosphate = phosphoenolpyruvate + hydrogencarbonate. In terms of biological role, forms oxaloacetate, a four-carbon dicarboxylic acid source for the tricarboxylic acid cycle. This chain is Phosphoenolpyruvate carboxylase, found in Aromatoleum aromaticum (strain DSM 19018 / LMG 30748 / EbN1) (Azoarcus sp. (strain EbN1)).